The following is a 1244-amino-acid chain: DNA polymerase beta (1244 aa).

A run of 13 repeats spans residues 1069–1072 (AGNP), 1073–1076 (AGNP), 1077–1080 (AGNP), 1081–1084 (AGNP), 1085–1088 (AGNP), 1089–1092 (AGNP), 1093–1096 (AGNP), 1097–1100 (AGNP), 1101–1104 (AGNP), 1105–1108 (AGNP), 1109–1112 (AGNP), 1113–1116 (AGNP), and 1117–1120 (AGNP). The segment at 1069–1118 (AGNPAGNPAGNPAGNPAGNPAGNPAGNPAGNPAGNPAGNPAGNPAGNPAG) is disordered. A 13 X 4 AA tandem repeats of A-G-N-P region spans residues 1069–1120 (AGNPAGNPAGNPAGNPAGNPAGNPAGNPAGNPAGNPAGNPAGNPAGNPAGNP).

The protein belongs to the DNA polymerase type-B family.

The catalysed reaction is DNA(n) + a 2'-deoxyribonucleoside 5'-triphosphate = DNA(n+1) + diphosphate. In terms of biological role, DNA-directed DNA polymerase involved in viral DNA replication. This African swine fever virus (isolate Pig/Portugal/Lis 60/1960) (ASFV) protein is DNA polymerase beta (DPOL).